We begin with the raw amino-acid sequence, 258 residues long: Thrombin-like enzyme saxthrombin (258 aa).

The N-terminal stretch at 1-18 is a signal peptide; it reads MVLIRVLANLLILQLSYA. Positions 19 to 24 are excised as a propeptide; sequence QKSSEL. Positions 25-249 constitute a Peptidase S1 domain; it reads VIGGDECNIN…YNHWIQSIIA (225 aa). Cystine bridges form between Cys-31-Cys-163, Cys-50-Cys-66, Cys-98-Cys-256, Cys-142-Cys-210, Cys-174-Cys-189, and Cys-200-Cys-225. N-linked (GlcNAc...) asparagine glycosylation is present at Asn-44. Residues His-65 and Asp-110 each act as charge relay system in the active site. Catalysis depends on Ser-204, which acts as the Charge relay system. The N-linked (GlcNAc...) asparagine glycan is linked to Asn-251.

Belongs to the peptidase S1 family. Snake venom subfamily. As to quaternary structure, monomer. As to expression, expressed by the venom gland.

Its subcellular location is the secreted. Thrombin-like snake venom serine protease that shows strong blood coagulation activity in vitro. The polypeptide is Thrombin-like enzyme saxthrombin (Gloydius intermedius (Central Asian pit viper)).